The primary structure comprises 662 residues: A-kinase anchor protein 10, mitochondrial (662 aa).

The N-terminal 28 residues, 1 to 28, are a transit peptide targeting the mitochondrion; sequence MRGAGPSPRQSPRTLRPDPGPAMSFFRR. Residues 1–55 form a disordered region; that stretch reads MRGAGPSPRQSPRTLRPDPGPAMSFFRRKVKGKEQEKTSDVKSIKASISVHSPQK. The span at 32–43 shows a compositional bias: basic and acidic residues; it reads GKEQEKTSDVKS. Residues serine 52 and serine 189 each carry the phosphoserine modification. RGS domains follow at residues 125 to 369 and 379 to 505; these read TLEQ…CKYQ and YLAD…YKYL. Positions 261-280 are enriched in polar residues; that stretch reads SMETQESSSTLTVASRNSPA. Residues 261-282 form a disordered region; that stretch reads SMETQESSSTLTVASRNSPASP. Serine 281 bears the Phosphoserine mark. The disordered stretch occupies residues 524 to 548; the sequence is LTAPGSVGPPDESHPGSSDSSASQS. A PKA-RII subunit binding region spans residues 634–647; sequence LAWKIAKMIVSDIM.

The protein resides in the mitochondrion. It is found in the membrane. The protein localises to the cytoplasm. Its function is as follows. Differentially targeted protein that binds to type I and II regulatory subunits of protein kinase A and anchors them to the mitochondria or the plasma membrane. Although the physiological relevance between PKA and AKAPS with mitochondria is not fully understood, one idea is that BAD, a proapoptotic member, is phosphorylated and inactivated by mitochondria-anchored PKA. It cannot be excluded too that it may facilitate PKA as well as G protein signal transduction, by acting as an adapter for assembling multiprotein complexes. With its RGS domain, it could lead to the interaction to G-alpha proteins, providing a link between the signaling machinery and the downstream kinase. This chain is A-kinase anchor protein 10, mitochondrial (AKAP10), found in Homo sapiens (Human).